A 100-amino-acid chain; its full sequence is MYB-like transcription factor TCL2 (100 aa).

One can recognise a Myb-like domain in the interval Thr37–Trp74.

As to quaternary structure, interacts with GL3. Expressed in cotyledons, petioles, rosette leaves, hydathodes, cauline leaves, stems, pedicels and flower buds.

The protein resides in the nucleus. Functionally, MYB-type transcription factor involved in trichome cell specification. Acts as a negative regulator of trichome patterning and formation. May function by suppressing the expression of GL3. This chain is MYB-like transcription factor TCL2 (TCL2), found in Arabidopsis thaliana (Mouse-ear cress).